The following is a 127-amino-acid chain: Glycine cleavage system H protein 1 (127 aa).

In terms of domain architecture, Lipoyl-binding spans 20 to 101 (LLTVGITAYA…LGEAWFFRFR (82 aa)). Lysine 60 is modified (N6-lipoyllysine).

The protein belongs to the GcvH family. In terms of assembly, the glycine cleavage system is composed of four proteins: P, T, L and H. It depends on (R)-lipoate as a cofactor.

Its function is as follows. The glycine cleavage system catalyzes the degradation of glycine. The H protein shuttles the methylamine group of glycine from the P protein to the T protein. The protein is Glycine cleavage system H protein 1 of Pseudomonas aeruginosa (strain ATCC 15692 / DSM 22644 / CIP 104116 / JCM 14847 / LMG 12228 / 1C / PRS 101 / PAO1).